The primary structure comprises 381 residues: Acetylornithine deacetylase (381 aa).

Residue His-79 participates in Zn(2+) binding. The active site involves Asp-81. Asp-111 provides a ligand contact to Zn(2+). Residue Glu-143 is part of the active site. Zn(2+) is bound by residues Glu-144, Glu-168, and His-354.

Belongs to the peptidase M20A family. ArgE subfamily. As to quaternary structure, homodimer. Requires Zn(2+) as cofactor. Co(2+) serves as cofactor. Glutathione is required as a cofactor.

The protein resides in the cytoplasm. It catalyses the reaction N(2)-acetyl-L-ornithine + H2O = L-ornithine + acetate. It functions in the pathway amino-acid biosynthesis; L-arginine biosynthesis; L-ornithine from N(2)-acetyl-L-ornithine (linear): step 1/1. Functionally, catalyzes the hydrolysis of the amide bond of N(2)-acetylated L-amino acids. Cleaves the acetyl group from N-acetyl-L-ornithine to form L-ornithine, an intermediate in L-arginine biosynthesis pathway, and a branchpoint in the synthesis of polyamines. The sequence is that of Acetylornithine deacetylase from Buchnera aphidicola subsp. Acyrthosiphon pisum (strain 5A).